The sequence spans 607 residues: UvrABC system protein C (607 aa).

The GIY-YIG domain occupies 16–94 (GRPGVYRMFD…IKEWRPPYNI (79 aa)). Residues 203 to 238 (QQLGNELNAEMEKAAMALNFEKAAELRDQIALLRRV) enclose the UVR domain.

Belongs to the UvrC family. In terms of assembly, interacts with UvrB in an incision complex.

It is found in the cytoplasm. Functionally, the UvrABC repair system catalyzes the recognition and processing of DNA lesions. UvrC both incises the 5' and 3' sides of the lesion. The N-terminal half is responsible for the 3' incision and the C-terminal half is responsible for the 5' incision. In Pseudomonas entomophila (strain L48), this protein is UvrABC system protein C.